The primary structure comprises 214 residues: Thiamine-phosphate synthase (214 aa).

4-amino-2-methyl-5-(diphosphooxymethyl)pyrimidine-binding positions include 37 to 41 (QYREK) and asparagine 73. The Mg(2+) site is built by aspartate 74 and aspartate 93. Serine 112 contacts 4-amino-2-methyl-5-(diphosphooxymethyl)pyrimidine. 139–141 (TIS) lines the 2-[(2R,5Z)-2-carboxy-4-methylthiazol-5(2H)-ylidene]ethyl phosphate pocket. Lysine 142 serves as a coordination point for 4-amino-2-methyl-5-(diphosphooxymethyl)pyrimidine. Residues glycine 171 and 191 to 192 (IS) each bind 2-[(2R,5Z)-2-carboxy-4-methylthiazol-5(2H)-ylidene]ethyl phosphate.

Belongs to the thiamine-phosphate synthase family. Requires Mg(2+) as cofactor.

It carries out the reaction 2-[(2R,5Z)-2-carboxy-4-methylthiazol-5(2H)-ylidene]ethyl phosphate + 4-amino-2-methyl-5-(diphosphooxymethyl)pyrimidine + 2 H(+) = thiamine phosphate + CO2 + diphosphate. The enzyme catalyses 2-(2-carboxy-4-methylthiazol-5-yl)ethyl phosphate + 4-amino-2-methyl-5-(diphosphooxymethyl)pyrimidine + 2 H(+) = thiamine phosphate + CO2 + diphosphate. The catalysed reaction is 4-methyl-5-(2-phosphooxyethyl)-thiazole + 4-amino-2-methyl-5-(diphosphooxymethyl)pyrimidine + H(+) = thiamine phosphate + diphosphate. Its pathway is cofactor biosynthesis; thiamine diphosphate biosynthesis; thiamine phosphate from 4-amino-2-methyl-5-diphosphomethylpyrimidine and 4-methyl-5-(2-phosphoethyl)-thiazole: step 1/1. Functionally, condenses 4-methyl-5-(beta-hydroxyethyl)thiazole monophosphate (THZ-P) and 2-methyl-4-amino-5-hydroxymethyl pyrimidine pyrophosphate (HMP-PP) to form thiamine monophosphate (TMP). The sequence is that of Thiamine-phosphate synthase from Listeria monocytogenes serotype 4a (strain HCC23).